Here is a 134-residue protein sequence, read N- to C-terminus: uncharacterized protein (134 aa).

3 consecutive transmembrane segments (helical) span residues 5 to 25 (FGIFSFLAVSVSAAGFFFGGF), 30 to 50 (LILLSLMAIEFISTTLKETII), and 62 to 82 (LVKKLVTLALISVCHFFDQLL).

Belongs to the bacteriophage holin family. Cp-1 holin subfamily.

It localises to the cell membrane. This is an uncharacterized protein from Bacillus subtilis (strain 168).